The following is a 253-amino-acid chain: MAPCIPKKYTAGQNPVTKFEGAFVVTKMDPPEGRCFLFHTVINVNHHRVKALEKSGKKPPKHFHPNQYEYFKVISGQLTVEINDVEHILTPEDGEVTLEPGPHHRLWGTPGQKNDKVVFLISASTNARSYQLDQAFFENWYGYQEDMMMRGTAPDLIQVCCMFEAGDSYLSPPWWVPFRHFFGYWLTVILGYYIGSLLGYQPFFPEWTTDWDAACDKMASSLLQKKFAIRELQDVVKKNFDANGDPLPAKKLL.

The helical transmembrane segment at 181 to 203 (FFGYWLTVILGYYIGSLLGYQPF) threads the bilayer.

Belongs to the oxidoreductase OpS7 family.

The protein localises to the membrane. Its pathway is secondary metabolite biosynthesis; terpenoid biosynthesis. Functionally, oxidoreductase; part of the gene cluster that mediates the biosynthesis of sesquiterpenyl epoxy-cyclohexenoids (SECs) such as anthrobotrisins and arthrosporols, metabolites that possess a novel hybrid carbon skeleton consisting of a polyketide-derived epoxycyclohexenol combined with a terpenoid-derived monocyclic sesquiterpenol substructure (PKS-PTS hybrid). The SEC pathway plays an important role for fungal soil colonization via decreasing fungal nematode-capturing ability. Within the pathway, the oxidoreductase AOL_s00215g277 seems to play a role in the farnesylation step of toluquinol to produce farnesyl hydroquinone, the hybrid precursor for biosynthesis of SECs. The pathway begins with the biosynthesis of 6-methylsalicylic acid (6-MSA), the first precursor of the polyketide-derived epoxycyclohexenol in arthrosporols, by the polyketide synthase (PKS) AOL_s00215g283 via condensation of 1 acetate and 3 malonate units. The 6-methylsalicylic acid decarboxylase AOL_s00215g281 then catalyzes the decarboxylation of 6-methylsalicylic acid to yield m-cresol. The cytochrome P450 monooxygenase AOL_s00215g282 further oxidizes m-cresol to yield toluquinol. With the assistance of the oxidoreductase AOL_s00215g277, the polyprenyl transferase AOL_s00215g276 catalyzes the farnesylation of toluquinol to produce farnesyl hydroquinone, the hybrid precursor for biosynthesis of SECs. Farnesyl hydroquinone undergoes epoxidation and then subsequent dehydrogenation to form farnesyl epoxy-quinone, the first and simplest SEC. The cytochrome P450 monooxygenase AOL_s00215g278 and the FAD-dependent monooxygenase AOL_s00215g279 might be involved in the oxygenation of the phenol moiety, most likely in the epoxy formation. The cytochrome P450 monooxygenases AOL_s00215g274 and AOL_s00215g280 are involved in specific regional ketone reductions at respectively C-4 and C-1 of farnesyl epoxy-quinone PubMed:33823587. The polypeptide is Oxidoreductase AOL_s00215g277 (Arthrobotrys oligospora (strain ATCC 24927 / CBS 115.81 / DSM 1491) (Nematode-trapping fungus)).